We begin with the raw amino-acid sequence, 221 residues long: Iron-sulfur cluster repair protein YtfE (221 aa).

The protein belongs to the RIC family. YtfE subfamily. Homodimer.

The protein localises to the cytoplasm. Di-iron-containing protein involved in the repair of iron-sulfur clusters damaged by oxidative and nitrosative stress conditions. The sequence is that of Iron-sulfur cluster repair protein YtfE from Pectobacterium atrosepticum (strain SCRI 1043 / ATCC BAA-672) (Erwinia carotovora subsp. atroseptica).